A 314-amino-acid chain; its full sequence is Malate dehydrogenase (314 aa).

NAD(+) contacts are provided by residues 7–12 (GAGNVG) and Asp-32. Substrate-binding residues include Arg-81 and Arg-87. NAD(+) contacts are provided by residues Asn-94 and 117–119 (VAN). Residues Asn-119 and Arg-150 each contribute to the substrate site. Residue His-174 is the Proton acceptor of the active site.

This sequence belongs to the LDH/MDH superfamily. MDH type 3 family.

The catalysed reaction is (S)-malate + NAD(+) = oxaloacetate + NADH + H(+). Catalyzes the reversible oxidation of malate to oxaloacetate. The chain is Malate dehydrogenase from Salinibacter ruber (strain DSM 13855 / M31).